Here is a 123-residue protein sequence, read N- to C-terminus: Small ribosomal subunit protein uS12 (123 aa).

Position 89 is a 3-methylthioaspartic acid (Asp89). The interval 100–123 is disordered; that stretch reads GSLDTSGVKGRNQGRSKYGTKRPK. The span at 111–123 shows a compositional bias: basic residues; that stretch reads NQGRSKYGTKRPK.

This sequence belongs to the universal ribosomal protein uS12 family. In terms of assembly, part of the 30S ribosomal subunit. Contacts proteins S8 and S17. May interact with IF1 in the 30S initiation complex.

Functionally, with S4 and S5 plays an important role in translational accuracy. Interacts with and stabilizes bases of the 16S rRNA that are involved in tRNA selection in the A site and with the mRNA backbone. Located at the interface of the 30S and 50S subunits, it traverses the body of the 30S subunit contacting proteins on the other side and probably holding the rRNA structure together. The combined cluster of proteins S8, S12 and S17 appears to hold together the shoulder and platform of the 30S subunit. This is Small ribosomal subunit protein uS12 from Pseudomonas fluorescens (strain ATCC BAA-477 / NRRL B-23932 / Pf-5).